The primary structure comprises 245 residues: Small ribosomal subunit protein uS2 (245 aa).

Belongs to the universal ribosomal protein uS2 family.

In Pseudomonas fluorescens (strain SBW25), this protein is Small ribosomal subunit protein uS2.